The following is a 360-amino-acid chain: Teichoic acids export ATP-binding protein TagH (360 aa).

The region spanning 24–245 (LKAMFFPKTR…YEDYINWFNK (222 aa)) is the ABC transporter domain. Residue 59–66 (GINGSGKS) coordinates ATP. The segment at 246-360 (LSKEEKEAHK…GDIDNSDVSL (115 aa)) is unknown. The interval 270–290 (EEQENGKAGSGGDGTQPIVQP) is disordered.

Belongs to the ABC transporter superfamily. Teichoic acids exporter (TC 3.A.1.104.1) family. As to quaternary structure, the complex is composed of two ATP-binding proteins (TagH) and two transmembrane proteins (TagG).

It is found in the cell membrane. The catalysed reaction is ATP + H2O + teichoic acidSide 1 = ADP + phosphate + teichoic acidSide 2.. In terms of biological role, part of the ABC transporter complex TagGH involved in teichoic acids export. Responsible for energy coupling to the transport system. The chain is Teichoic acids export ATP-binding protein TagH from Shouchella clausii (strain KSM-K16) (Alkalihalobacillus clausii).